Reading from the N-terminus, the 526-residue chain is Trigger factor (526 aa).

The PPIase FKBP-type domain occupies 162–243 (GDFVSIDLSA…LGSVKERELP (82 aa)). The span at 425 to 460 (DTDGADVDPKEYFGDVEAEGDKADKAETDKAEEKPK) shows a compositional bias: basic and acidic residues. The interval 425–526 (DTDGADVDPK…AKKAAEKKED (102 aa)) is disordered. Residues 461–517 (KAPAKKSTTKKSTAKKSTAKKSTAKKSTAKKSTAKKSTTKKATKSTAKKSTAKKTTA) are compositionally biased toward basic residues.

It belongs to the FKBP-type PPIase family. Tig subfamily.

It is found in the cytoplasm. It carries out the reaction [protein]-peptidylproline (omega=180) = [protein]-peptidylproline (omega=0). Its function is as follows. Involved in protein export. Acts as a chaperone by maintaining the newly synthesized protein in an open conformation. Functions as a peptidyl-prolyl cis-trans isomerase. The sequence is that of Trigger factor from Corynebacterium jeikeium (strain K411).